A 432-amino-acid chain; its full sequence is Glutamyl-tRNA reductase (432 aa).

Substrate is bound by residues 49–52 (TCNR), Ser109, 114–116 (EGQ), and Gln120. The Nucleophile role is filled by Cys50. 189–194 (GAGKMS) contributes to the NADP(+) binding site.

It belongs to the glutamyl-tRNA reductase family. Homodimer.

The enzyme catalyses (S)-4-amino-5-oxopentanoate + tRNA(Glu) + NADP(+) = L-glutamyl-tRNA(Glu) + NADPH + H(+). It participates in porphyrin-containing compound metabolism; protoporphyrin-IX biosynthesis; 5-aminolevulinate from L-glutamyl-tRNA(Glu): step 1/2. It functions in the pathway porphyrin-containing compound metabolism; chlorophyll biosynthesis. Its function is as follows. Catalyzes the NADPH-dependent reduction of glutamyl-tRNA(Glu) to glutamate 1-semialdehyde (GSA). This chain is Glutamyl-tRNA reductase, found in Cyanothece sp. (strain PCC 7425 / ATCC 29141).